A 202-amino-acid chain; its full sequence is Recoverin (202 aa).

Residue Gly2 is the site of N-myristoyl glycine attachment. EF-hand domains lie at 24–59 (TEEE…FFPE), 61–96 (DPKA…TSAG), 97–132 (KTNQ…IFKM), and 147–182 (TPEK…NKEI). At Cys39 the chain carries Cysteine sulfenic acid (-SOH). Ca(2+) contacts are provided by Asp74, Asn76, Asp78, Thr80, Glu85, Asp110, Asp112, Asn114, Thr116, and Glu121. The segment at 189-192 (EPQK) is interaction with GRK1. The tract at residues 191–202 (QKVKEKLKEKKL) is modulates EF-hand 3 domain calcium binding affinity.

It belongs to the recoverin family. In terms of assembly, homodimer; disulfide-linked. Homodimerization is caused by prolonged intense illumination. May form a complex composed of RHO, GRK1 and RCVRN in a Ca(2+)-dependent manner; RCVRN prevents the interaction between GRK1 and RHO. Interacts (via C-terminus) with GRK1 (via N-terminus); the interaction is Ca(2+)-dependent. The N-terminal glycine is linked to one of four different types of acyl groups. The most abundant is myristoleate (14:1), but 14:0, 14:2, and 12:0 acyl residues are also present. The Ca(2+) induced exposure of the myristoyl group, known as the calcium-myristoyl switch, promotes RCVRN binding to the photoreceptor cell membranes only when intracellular Ca(2+) concentration is high. Post-translationally, oxidation on Cys-39 occurs in response to prolonged intense illumination and results in the formation of disulfide homodimers, and to a lesser extent disulfide-linked heterodimers. In terms of tissue distribution, expressed in the retina (at protein level). Expressed in the pineal gland (at protein level).

Its subcellular location is the photoreceptor inner segment. The protein resides in the cell projection. It is found in the cilium. The protein localises to the photoreceptor outer segment. It localises to the photoreceptor outer segment membrane. Its subcellular location is the perikaryon. Functionally, acts as a calcium sensor and regulates phototransduction of cone and rod photoreceptor cells. Modulates light sensitivity of cone photoreceptor in dark and dim conditions. In response to high Ca(2+) levels induced by low light levels, prolongs RHO/rhodopsin activation in rod photoreceptor cells by binding to and inhibiting GRK1-mediated phosphorylation of RHO/rhodopsin. Plays a role in scotopic vision/enhances vision in dim light by enhancing signal transfer between rod photoreceptors and rod bipolar cells. Improves rod photoreceptor sensitivity in dim light and mediates response of rod photoreceptors to facilitate detection of change and motion in bright light. The chain is Recoverin (RCVRN) from Bos taurus (Bovine).